Here is a 1157-residue protein sequence, read N- to C-terminus: uncharacterized protein (1157 aa).

Basic and acidic residues predominate over residues 1-10 (MDPHWKRHDS). 3 disordered regions span residues 1 to 35 (MDPH…QRFG), 159 to 233 (QTTP…SVEP), and 478 to 498 (KNQS…GKGP). Low complexity-rich tracts occupy residues 18-31 (SPSA…PSSA) and 181-197 (SAGT…NPNF). Residues 208–228 (QEWQQSPLESPLSMHSLQESL) show a composition bias toward polar residues. One can recognise a CSD2 domain in the interval 501-574 (VWFKPSDKRI…KVEYKAILHD (74 aa)). The region spanning 608-921 (LRDKLTFMIG…ICVQRQLREA (314 aa)) is the RNB domain. In terms of domain architecture, DIS3L2 C-terminal spans 973–1030 (GLVKHKAFVLAVDQEYIDIVIYEFGLERRISLDLLPLSNCDFNEQKHELYLSWRTNAS). The interval 1084–1113 (YSKARGNDSTSKTAKSSSGNQDISGDGKLH) is disordered. The span at 1090–1106 (NDSTSKTAKSSSGNQDI) shows a compositional bias: polar residues.

The protein belongs to the RNR ribonuclease family.

It localises to the cytoplasm. This is an uncharacterized protein from Schizosaccharomyces pombe (strain 972 / ATCC 24843) (Fission yeast).